We begin with the raw amino-acid sequence, 287 residues long: Probable endonuclease 4 (287 aa).

Zn(2+) contacts are provided by histidine 69, histidine 109, glutamate 144, aspartate 178, histidine 181, histidine 215, aspartate 228, histidine 230, and glutamate 260.

Belongs to the AP endonuclease 2 family. The cofactor is Zn(2+).

It catalyses the reaction Endonucleolytic cleavage to 5'-phosphooligonucleotide end-products.. Its function is as follows. Endonuclease IV plays a role in DNA repair. It cleaves phosphodiester bonds at apurinic or apyrimidinic (AP) sites, generating a 3'-hydroxyl group and a 5'-terminal sugar phosphate. This is Probable endonuclease 4 from Thermotoga petrophila (strain ATCC BAA-488 / DSM 13995 / JCM 10881 / RKU-1).